The chain runs to 194 residues: Protein GrpE (194 aa).

It belongs to the GrpE family. As to quaternary structure, homodimer.

The protein localises to the cytoplasm. Participates actively in the response to hyperosmotic and heat shock by preventing the aggregation of stress-denatured proteins, in association with DnaK and GrpE. It is the nucleotide exchange factor for DnaK and may function as a thermosensor. Unfolded proteins bind initially to DnaJ; upon interaction with the DnaJ-bound protein, DnaK hydrolyzes its bound ATP, resulting in the formation of a stable complex. GrpE releases ADP from DnaK; ATP binding to DnaK triggers the release of the substrate protein, thus completing the reaction cycle. Several rounds of ATP-dependent interactions between DnaJ, DnaK and GrpE are required for fully efficient folding. This is Protein GrpE from Aliivibrio fischeri (strain ATCC 700601 / ES114) (Vibrio fischeri).